A 149-amino-acid polypeptide reads, in one-letter code: Large ribosomal subunit protein bL9 (149 aa).

This sequence belongs to the bacterial ribosomal protein bL9 family.

Its function is as follows. Binds to the 23S rRNA. This is Large ribosomal subunit protein bL9 from Glaesserella parasuis serovar 5 (strain SH0165) (Haemophilus parasuis).